We begin with the raw amino-acid sequence, 320 residues long: Small ribosomal subunit protein uS2 (320 aa).

Acidic residues predominate over residues 1 to 22 (MADETTTDTPDVQDEDAPDEDA). Residues 1–83 (MADETTTDTP…SSSEEETSHR (83 aa)) are disordered. The segment covering 27–41 (DDTASDSTGEAAAAD) has biased composition (low complexity). 2 stretches are compositionally biased toward acidic residues: residues 42-57 (TDAD…EDAP) and 65-78 (DDGD…SSEE).

Belongs to the universal ribosomal protein uS2 family.

This chain is Small ribosomal subunit protein uS2, found in Salinibacter ruber (strain DSM 13855 / M31).